A 547-amino-acid polypeptide reads, in one-letter code: Glucose-6-phosphate isomerase (547 aa).

The active-site Proton donor is Glu353. Catalysis depends on residues His384 and Lys512.

The protein belongs to the GPI family.

Its subcellular location is the cytoplasm. The catalysed reaction is alpha-D-glucose 6-phosphate = beta-D-fructose 6-phosphate. It functions in the pathway carbohydrate biosynthesis; gluconeogenesis. It participates in carbohydrate degradation; glycolysis; D-glyceraldehyde 3-phosphate and glycerone phosphate from D-glucose: step 2/4. Functionally, catalyzes the reversible isomerization of glucose-6-phosphate to fructose-6-phosphate. The chain is Glucose-6-phosphate isomerase from Campylobacter jejuni subsp. doylei (strain ATCC BAA-1458 / RM4099 / 269.97).